The primary structure comprises 219 residues: Thiamine-phosphate synthase (219 aa).

4-amino-2-methyl-5-(diphosphooxymethyl)pyrimidine contacts are provided by residues 44-48 (QFREK) and Asn79. Residues Asp80 and Asp99 each contribute to the Mg(2+) site. Ser117 contacts 4-amino-2-methyl-5-(diphosphooxymethyl)pyrimidine. 143 to 145 (TST) lines the 2-[(2R,5Z)-2-carboxy-4-methylthiazol-5(2H)-ylidene]ethyl phosphate pocket. 4-amino-2-methyl-5-(diphosphooxymethyl)pyrimidine is bound at residue Lys146. 2-[(2R,5Z)-2-carboxy-4-methylthiazol-5(2H)-ylidene]ethyl phosphate contacts are provided by residues Gly175 and 195 to 196 (IS).

Belongs to the thiamine-phosphate synthase family. It depends on Mg(2+) as a cofactor.

It catalyses the reaction 2-[(2R,5Z)-2-carboxy-4-methylthiazol-5(2H)-ylidene]ethyl phosphate + 4-amino-2-methyl-5-(diphosphooxymethyl)pyrimidine + 2 H(+) = thiamine phosphate + CO2 + diphosphate. The enzyme catalyses 2-(2-carboxy-4-methylthiazol-5-yl)ethyl phosphate + 4-amino-2-methyl-5-(diphosphooxymethyl)pyrimidine + 2 H(+) = thiamine phosphate + CO2 + diphosphate. It carries out the reaction 4-methyl-5-(2-phosphooxyethyl)-thiazole + 4-amino-2-methyl-5-(diphosphooxymethyl)pyrimidine + H(+) = thiamine phosphate + diphosphate. Its pathway is cofactor biosynthesis; thiamine diphosphate biosynthesis; thiamine phosphate from 4-amino-2-methyl-5-diphosphomethylpyrimidine and 4-methyl-5-(2-phosphoethyl)-thiazole: step 1/1. Its function is as follows. Condenses 4-methyl-5-(beta-hydroxyethyl)thiazole monophosphate (THZ-P) and 2-methyl-4-amino-5-hydroxymethyl pyrimidine pyrophosphate (HMP-PP) to form thiamine monophosphate (TMP). This Bacillus cereus (strain AH187) protein is Thiamine-phosphate synthase.